A 77-amino-acid chain; its full sequence is Acyl carrier protein (77 aa).

A Carrier domain is found at 1-76; that stretch reads MATFDDVKAV…DVVNYIDNLK (76 aa). S36 carries the post-translational modification O-(pantetheine 4'-phosphoryl)serine.

This sequence belongs to the acyl carrier protein (ACP) family. In terms of processing, 4'-phosphopantetheine is transferred from CoA to a specific serine of apo-ACP by AcpS. This modification is essential for activity because fatty acids are bound in thioester linkage to the sulfhydryl of the prosthetic group.

Its subcellular location is the cytoplasm. Its pathway is lipid metabolism; fatty acid biosynthesis. In terms of biological role, carrier of the growing fatty acid chain in fatty acid biosynthesis. This is Acyl carrier protein from Campylobacter jejuni subsp. jejuni serotype O:6 (strain 81116 / NCTC 11828).